A 148-amino-acid chain; its full sequence is Large ribosomal subunit protein bL9 (148 aa).

Belongs to the bacterial ribosomal protein bL9 family.

Functionally, binds to the 23S rRNA. The chain is Large ribosomal subunit protein bL9 from Caldicellulosiruptor bescii (strain ATCC BAA-1888 / DSM 6725 / KCTC 15123 / Z-1320) (Anaerocellum thermophilum).